A 204-amino-acid chain; its full sequence is Transcription initiation factor TFIID subunit 11b (204 aa).

The tract at residues 38 to 60 (PFEAAMEEQEESPVETEQTLEGD) is disordered. Residues 42–58 (AMEEQEESPVETEQTLE) show a composition bias toward acidic residues. The 90-residue stretch at 106 to 195 (FTEEQMSRYE…RRLKLQGKVP (90 aa)) folds into the Histone-fold domain.

It belongs to the TAF11 family. As to quaternary structure, component of the TFIID complex. TFIID is composed of TATA binding protein (TBP) and a number of TBP-associated factors (TAFs) whose MWs range from 14-217 kDa. Expressed in roots, leaves and inflorescences.

Its subcellular location is the nucleus. Functionally, TAFs are components of the transcription factor IID (TFIID) complex that is essential for mediating regulation of RNA polymerase transcription. The polypeptide is Transcription initiation factor TFIID subunit 11b (TAF11B) (Arabidopsis thaliana (Mouse-ear cress)).